The chain runs to 677 residues: Secretogranin-1 (677 aa).

The signal sequence occupies residues 1 to 20 (MQPAMLLGLLGAAALAAVSS). Cysteine 36 and cysteine 57 form a disulfide bridge. Disordered stretches follow at residues 63-505 (KSGK…RQYE) and 531-558 (NSDF…VTLT). Residues 64-90 (SGKEVKGEEKGENQNSKFEVRLLRDPA) show a composition bias toward basic and acidic residues. Phosphoserine occurs at positions 93, 99, and 100. Serine 93 is a glycosylation site (O-linked (Xyl...) (chondroitin sulfate) serine). O-linked (GalNAc...) threonine glycosylation is present at threonine 115. Residues 118-133 (GNEKWTEGGGHSREGV) are compositionally biased toward basic and acidic residues. Residues serine 129, serine 147, serine 190, and serine 220 each carry the phosphoserine modification. Composition is skewed to basic and acidic residues over residues 148–192 (KEAK…DSGE) and 200–249 (KRSE…KPQE). The O-linked (Xyl...) (chondroitin sulfate) serine glycan is linked to serine 237. Over residues 251–280 (TDQDQSQEESQEGEEGEEGEEGEEGEEDSA) the composition is skewed to acidic residues. Phosphoserine occurs at positions 256, 260, 300, 301, 318, and 342. The span at 306-322 (PLSEERRPSPKESKEAD) shows a compositional bias: basic and acidic residues. Residue tyrosine 348 is modified to Sulfotyrosine. Composition is skewed to basic and acidic residues over residues 363–409 (RGSE…ERSY) and 421–455 (GREP…DTAK). A phosphoserine mark is found at serine 365, serine 375, and serine 378. Tyrosine 472 carries the post-translational modification Sulfotyrosine. Basic and acidic residues predominate over residues 491 to 504 (EESREEVRFPDRQY). Serine 493, serine 532, and serine 543 each carry phosphoserine. Sulfotyrosine occurs at positions 566 and 624. The tract at residues 622 to 646 (DFYDSEEQMGPHQEANDEKARADQR) is disordered. Serine 626 bears the Phosphoserine mark. Residues 635–646 (EANDEKARADQR) are compositionally biased toward basic and acidic residues.

This sequence belongs to the chromogranin/secretogranin protein family. Interacts with ITPR1 in the secretory granules.

The protein resides in the secreted. In terms of biological role, secretogranin-1 is a neuroendocrine secretory granule protein, which may be the precursor for other biologically active peptides. This chain is Secretogranin-1 (Chgb), found in Mus musculus (Mouse).